A 212-amino-acid polypeptide reads, in one-letter code: Probable GTP-binding protein EngB (212 aa).

In terms of domain architecture, EngB-type G spans 23–197; sequence TGIEVAFAGR…ERILDGWFGL (175 aa). Residues 31-38, 58-62, 76-79, 143-146, and 176-178 each bind GTP; these read GRSNAGKS, GRTQL, DLPG, TKAD, and FSS. Positions 38 and 60 each coordinate Mg(2+).

The protein belongs to the TRAFAC class TrmE-Era-EngA-EngB-Septin-like GTPase superfamily. EngB GTPase family. Mg(2+) is required as a cofactor.

Its function is as follows. Necessary for normal cell division and for the maintenance of normal septation. The polypeptide is Probable GTP-binding protein EngB (Alteromonas mediterranea (strain DSM 17117 / CIP 110805 / LMG 28347 / Deep ecotype)).